The chain runs to 528 residues: Protein spinster homolog 1 (528 aa).

A disordered region spans residues methionine 1–glutamine 44. 12 helical membrane passes run isoleucine 50–leucine 70, glycine 98–leucine 118, tyrosine 126–proline 146, valine 160–valine 180, methionine 187–serine 207, tryptophan 218–valine 238, leucine 278–leucine 298, leucine 323–isoleucine 343, leucine 357–alanine 377, isoleucine 381–isoleucine 401, phenylalanine 421–isoleucine 441, and methionine 465–isoleucine 485. Serine 518 carries the post-translational modification Phosphoserine.

This sequence belongs to the major facilitator superfamily. Spinster (TC 2.A.1.49) family. As to quaternary structure, interacts with BCL2 and BCL2L1.

The protein resides in the lysosome membrane. It catalyses the reaction a 1-acyl-sn-glycero-3-phosphocholine(out) + H(+)(out) = a 1-acyl-sn-glycero-3-phosphocholine(in) + H(+)(in). The catalysed reaction is 1-hexadecanoyl-sn-glycero-3-phosphocholine(out) + H(+)(out) = 1-hexadecanoyl-sn-glycero-3-phosphocholine(in) + H(+)(in). The enzyme catalyses 1-(9Z-octadecenoyl)-sn-glycero-3-phosphocholine(out) + H(+)(out) = 1-(9Z-octadecenoyl)-sn-glycero-3-phosphocholine(in) + H(+)(in). It carries out the reaction 1-(5Z,8Z,11Z,14Z-eicosatetraenoyl)-sn-glycero-3-phosphocholine(out) + H(+)(out) = 1-(5Z,8Z,11Z,14Z-eicosatetraenoyl)-sn-glycero-3-phosphocholine(in) + H(+)(in). It catalyses the reaction 1-(4Z,7Z,10Z,13Z,16Z,19Z-docosahexaenoyl)-sn-glycero-3-phosphocholine(out) + H(+)(out) = 1-(4Z,7Z,10Z,13Z,16Z,19Z-docosahexaenoyl)-sn-glycero-3-phosphocholine(in) + H(+)(in). The catalysed reaction is a 1-acyl-sn-glycero-3-phosphoethanolamine(out) + H(+)(out) = a 1-acyl-sn-glycero-3-phosphoethanolamine(in) + H(+)(in). The enzyme catalyses 1-(9Z-octadecenoyl)-sn-glycero-3-phosphoethanolamine(out) + H(+)(out) = 1-(9Z-octadecenoyl)-sn-glycero-3-phosphoethanolamine(in) + H(+)(in). It carries out the reaction 1-acyl-sn-glycero-3-phospho-(1'-sn-glycerol)(out) + H(+)(out) = 1-acyl-sn-glycero-3-phospho-(1'-sn-glycerol)(in) + H(+)(in). It catalyses the reaction 1-(9Z-octadecenoyl)-sn-glycero-3-phospho-(1'-sn-glycerol)(out) + H(+)(out) = 1-(9Z-octadecenoyl)-sn-glycero-3-phospho-(1'-sn-glycerol)(in) + H(+)(in). The catalysed reaction is a 1-O-(1Z-alkenyl)-sn-glycero-3-phosphocholine(out) + H(+)(out) = a 1-O-(1Z-alkenyl)-sn-glycero-3-phosphocholine(in) + H(+)(in). The enzyme catalyses 1-(1Z-hexadecenyl)-sn-glycero-3-phosphocholine(out) + H(+)(out) = 1-(1Z-hexadecenyl)-sn-glycero-3-phosphocholine(in) + H(+)(in). It carries out the reaction a 1-O-(1Z-alkenyl)-sn-glycero-3-phosphoethanolamine(out) + H(+)(out) = a 1-O-(1Z-alkenyl)-sn-glycero-3-phosphoethanolamine(in) + H(+)(in). It catalyses the reaction 1-O-(1Z-hexadecenyl)-sn-glycero-3-phosphoethanolamine(out) + H(+)(out) = 1-O-(1Z-hexadecenyl)-sn-glycero-3-phosphoethanolamine(in) + H(+)(in). Its function is as follows. Plays a critical role in the phospholipid salvage pathway from lysosomes to the cytosol. Mediates the rate-limiting, proton-dependent, lysosomal efflux of lysophospholipids, which can then be reacylated by acyltransferases in the endoplasmic reticulum to form phospholipids. Selective for zwitterionic headgroups such as lysophosphatidylcholine (LPC) and lysophosphatidylethanolamine (LPE), can also transport lysophosphatidylglycerol (LPG), but not other anionic lysophospholipids, sphingosine, nor sphingomyelin. Transports lysophospholipids with saturated, monounsaturated, and polyunsaturated fatty acids, such as 1-hexadecanoyl-sn-glycero-3-phosphocholine, 1-(9Z-octadecenoyl)-sn-glycero-3-phosphocholine and 1-(4Z,7Z,10Z,13Z,16Z,19Z-docosahexaenoyl)-sn-glycero-3-phosphocholine, respectively. Can also transport lysoplasmalogen (LPC with a fatty alcohol) such as 1-(1Z-hexadecenyl)-sn-glycero-3-phosphocholine. Essential player in lysosomal homeostasis. Crucial for cell survival under conditions of nutrient limitation. May be involved in necrotic or autophagic cell death. In Bos taurus (Bovine), this protein is Protein spinster homolog 1 (SPNS1).